We begin with the raw amino-acid sequence, 579 residues long: UPF0329 protein ECU06_1620 (579 aa).

Disordered regions lie at residues 325–360 (EEKAKGRKDGKKKSVNVSEVKEEESETEEVEAGEEA) and 370–389 (ARRKTGKKSRGGRKRYKIHK). The segment covering 329–338 (KGRKDGKKKS) has biased composition (basic residues). Over residues 345-360 (KEEESETEEVEAGEEA) the composition is skewed to acidic residues.

It belongs to the UPF0329 family.

In Encephalitozoon cuniculi (strain GB-M1) (Microsporidian parasite), this protein is UPF0329 protein ECU06_1620.